Here is a 443-residue protein sequence, read N- to C-terminus: GTPase Der (443 aa).

EngA-type G domains lie at 3 to 167 and 176 to 349; these read PVIA…PEEK and IKIA…QSIQ. Residues 9-16, 56-60, 119-122, 182-189, 229-233, and 294-297 each bind GTP; these read GRPNVGKS, DTGGL, NKAD, DTAGI, and NKWD. The KH-like domain occupies 350-434; it reads QELTTGQLTR…PVHIKLKTDP (85 aa).

The protein belongs to the TRAFAC class TrmE-Era-EngA-EngB-Septin-like GTPase superfamily. EngA (Der) GTPase family. As to quaternary structure, associates with the 50S ribosomal subunit.

GTPase that plays an essential role in the late steps of ribosome biogenesis. In Coxiella burnetii (strain CbuG_Q212) (Coxiella burnetii (strain Q212)), this protein is GTPase Der.